Consider the following 294-residue polypeptide: tRNA pseudouridine synthase B (294 aa).

Residue D39 is the Nucleophile of the active site.

This sequence belongs to the pseudouridine synthase TruB family. Type 1 subfamily.

The catalysed reaction is uridine(55) in tRNA = pseudouridine(55) in tRNA. Its function is as follows. Responsible for synthesis of pseudouridine from uracil-55 in the psi GC loop of transfer RNAs. The polypeptide is tRNA pseudouridine synthase B (Streptococcus pyogenes serotype M3 (strain ATCC BAA-595 / MGAS315)).